The sequence spans 110 residues: Putative membrane protein insertion efficiency factor (110 aa).

The protein belongs to the UPF0161 family.

Its subcellular location is the cell inner membrane. Functionally, could be involved in insertion of integral membrane proteins into the membrane. The sequence is that of Putative membrane protein insertion efficiency factor from Aliarcobacter butzleri (strain RM4018) (Arcobacter butzleri).